The chain runs to 264 residues: Hemin import ATP-binding protein HmuV (264 aa).

The 241-residue stretch at 2 to 242 folds into the ABC transporter domain; it reads IEAVNICVQR…QNLSDAYHCS (241 aa). 34–41 serves as a coordination point for ATP; the sequence is GPNGSGKS.

This sequence belongs to the ABC transporter superfamily. Heme (hemin) importer (TC 3.A.1.14.5) family. In terms of assembly, the complex is composed of two ATP-binding proteins (HmuV), two transmembrane proteins (HmuU) and a solute-binding protein (HmuT).

It is found in the cell inner membrane. Functionally, part of the ABC transporter complex HmuTUV involved in hemin import. Responsible for energy coupling to the transport system. In Bartonella quintana (strain Toulouse) (Rochalimaea quintana), this protein is Hemin import ATP-binding protein HmuV.